The following is a 323-amino-acid chain: tRNA U34 carboxymethyltransferase (323 aa).

Carboxy-S-adenosyl-L-methionine-binding positions include Lys-91, Trp-105, Lys-110, Gly-130, 181-182 (IE), Met-196, Tyr-200, and Arg-315.

This sequence belongs to the class I-like SAM-binding methyltransferase superfamily. CmoB family. As to quaternary structure, homotetramer.

The enzyme catalyses carboxy-S-adenosyl-L-methionine + 5-hydroxyuridine(34) in tRNA = 5-carboxymethoxyuridine(34) in tRNA + S-adenosyl-L-homocysteine + H(+). Its function is as follows. Catalyzes carboxymethyl transfer from carboxy-S-adenosyl-L-methionine (Cx-SAM) to 5-hydroxyuridine (ho5U) to form 5-carboxymethoxyuridine (cmo5U) at position 34 in tRNAs. In Enterobacter sp. (strain 638), this protein is tRNA U34 carboxymethyltransferase.